We begin with the raw amino-acid sequence, 431 residues long: Enolase (431 aa).

Gln164 provides a ligand contact to (2R)-2-phosphoglycerate. Glu206 functions as the Proton donor in the catalytic mechanism. Mg(2+) contacts are provided by Asp243, Glu288, and Asp315. 4 residues coordinate (2R)-2-phosphoglycerate: Lys340, Arg369, Ser370, and Lys391. Lys340 (proton acceptor) is an active-site residue.

The protein belongs to the enolase family. It depends on Mg(2+) as a cofactor.

The protein localises to the cytoplasm. It is found in the secreted. The protein resides in the cell surface. The catalysed reaction is (2R)-2-phosphoglycerate = phosphoenolpyruvate + H2O. Its pathway is carbohydrate degradation; glycolysis; pyruvate from D-glyceraldehyde 3-phosphate: step 4/5. Catalyzes the reversible conversion of 2-phosphoglycerate (2-PG) into phosphoenolpyruvate (PEP). It is essential for the degradation of carbohydrates via glycolysis. This is Enolase from Fervidobacterium nodosum (strain ATCC 35602 / DSM 5306 / Rt17-B1).